Consider the following 1343-residue polypeptide: DNA-directed RNA polymerase subunit beta (1343 aa).

This sequence belongs to the RNA polymerase beta chain family. As to quaternary structure, the RNAP catalytic core consists of 2 alpha, 1 beta, 1 beta' and 1 omega subunit. When a sigma factor is associated with the core the holoenzyme is formed, which can initiate transcription.

The catalysed reaction is RNA(n) + a ribonucleoside 5'-triphosphate = RNA(n+1) + diphosphate. Functionally, DNA-dependent RNA polymerase catalyzes the transcription of DNA into RNA using the four ribonucleoside triphosphates as substrates. This Shewanella baltica (strain OS155 / ATCC BAA-1091) protein is DNA-directed RNA polymerase subunit beta.